A 476-amino-acid chain; its full sequence is Small ribosomal subunit protein mS29 (476 aa).

Residues 1–54 constitute a mitochondrion transit peptide; sequence MLPKFRSRSSIIKNTERISNILSGGKLTVCGSKLGGLYTFEKCTFNKYYSSSQY. The disordered stretch occupies residues 58-97; the sequence is GRPVGGNIHSSSNQQRQKNSEAPRINEIPPSTSSVEKSTT. Polar residues-rich tracts occupy residues 65 to 74 and 86 to 97; these read IHSSSNQQRQ and PPSTSSVEKSTT. 200-207 contacts ATP; sequence GAPGSGRS.

It belongs to the mitochondrion-specific ribosomal protein mS29 family. As to quaternary structure, component of the mitochondrial small ribosomal subunit (mt-SSU). Mature yeast 74S mitochondrial ribosomes consist of a small (37S) and a large (54S) subunit. The 37S small subunit contains a 15S ribosomal RNA (15S mt-rRNA) and at least 32 different proteins. The 54S large subunit contains a 21S rRNA (21S mt-rRNA) and at least 45 different proteins.

The protein resides in the mitochondrion. Component of the mitochondrial ribosome (mitoribosome), a dedicated translation machinery responsible for the synthesis of mitochondrial genome-encoded proteins, including at least some of the essential transmembrane subunits of the mitochondrial respiratory chain. The mitoribosomes are attached to the mitochondrial inner membrane and translation products are cotranslationally integrated into the membrane. mS29 binds GTP and is probably an active GTPase. GTP hydrolysis may be linked to subunit association. mS29 also has an extraribosomal function, being required for maintenance of mitochondrial DNA. The sequence is that of Small ribosomal subunit protein mS29 (rsm23) from Schizosaccharomyces pombe (strain 972 / ATCC 24843) (Fission yeast).